The chain runs to 940 residues: Protein translocase subunit SecA 1 (940 aa).

ATP is bound by residues glutamine 83, 101 to 105, and aspartate 490; that span reads GEGKT. Positions 856–940 are disordered; the sequence is AEQGGTATAA…AKPPKSVKRR (85 aa).

It belongs to the SecA family. In terms of assembly, monomer and homodimer. Part of the essential Sec protein translocation apparatus which comprises SecA, SecYEG and auxiliary proteins SecDF. Other proteins may also be involved.

The protein localises to the cell membrane. The protein resides in the cytoplasm. It catalyses the reaction ATP + H2O + cellular proteinSide 1 = ADP + phosphate + cellular proteinSide 2.. In terms of biological role, part of the Sec protein translocase complex. Interacts with the SecYEG preprotein conducting channel. Has a central role in coupling the hydrolysis of ATP to the transfer of proteins into and across the cell membrane, serving as an ATP-driven molecular motor driving the stepwise translocation of polypeptide chains across the membrane. This chain is Protein translocase subunit SecA 1, found in Mycolicibacterium paratuberculosis (strain ATCC BAA-968 / K-10) (Mycobacterium paratuberculosis).